Here is a 358-residue protein sequence, read N- to C-terminus: MSQAVKIELRETLKEKPDTSQLGFGKYFTDYMLSYDYDADKGWHDLKIVPYGPIEISPAAQGVHYGQSVFEGLKAYKKDGEVALFRPDENFKRLNNSLARLEMPQVNEGELLEGLKQLVDLEREWVPEGEGQSLYIRPFVFATEGVLGVGASHQYKLLIILSPSGAYYGGETLKPTKIYVEDEYVRAVRGGVGFAKVAGNYAASLLAQTNANKLGYDQVLWLDGVEQKYIEEVGSMNIFFVENGKVITPELNGSILPGITRKSIIELAKNLGYEVEERRVSIDELFESYDKGELTEVFGSGTAAVISPVGTLRYEDREIVINNNETGEITQKLYDVYTGIQNGTLEDKNGWRVVVPKY.

An N6-(pyridoxal phosphate)lysine modification is found at K196.

This sequence belongs to the class-IV pyridoxal-phosphate-dependent aminotransferase family. It depends on pyridoxal 5'-phosphate as a cofactor.

The enzyme catalyses L-leucine + 2-oxoglutarate = 4-methyl-2-oxopentanoate + L-glutamate. The catalysed reaction is L-isoleucine + 2-oxoglutarate = (S)-3-methyl-2-oxopentanoate + L-glutamate. It carries out the reaction L-valine + 2-oxoglutarate = 3-methyl-2-oxobutanoate + L-glutamate. Its pathway is amino-acid biosynthesis; L-isoleucine biosynthesis; L-isoleucine from 2-oxobutanoate: step 4/4. The protein operates within amino-acid biosynthesis; L-leucine biosynthesis; L-leucine from 3-methyl-2-oxobutanoate: step 4/4. It participates in amino-acid biosynthesis; L-valine biosynthesis; L-valine from pyruvate: step 4/4. Acts on leucine, isoleucine and valine. The polypeptide is Probable branched-chain-amino-acid aminotransferase (ilvE) (Staphylococcus aureus (strain MRSA252)).